The primary structure comprises 1171 residues: Pyruvate-flavodoxin oxidoreductase (1171 aa).

2 consecutive 4Fe-4S ferredoxin-type domains span residues 682-711 (EVPV…PALL) and 736-767 (YHLA…MQSL). 12 residues coordinate [4Fe-4S] cluster: Cys691, Cys694, Cys697, Cys701, Cys745, Cys748, Cys751, Cys755, Cys811, Cys814, Cys839, and Cys1072.

It belongs to the pyruvate:ferredoxin/flavodoxin oxidoreductase family. Requires [4Fe-4S] cluster as cofactor.

It carries out the reaction oxidized [flavodoxin] + pyruvate + CoA + 2 H(+) = reduced [flavodoxin] + acetyl-CoA + CO2. Oxidoreductase required for the transfer of electrons from pyruvate to flavodoxin, which reduces nitrogenase. This is Pyruvate-flavodoxin oxidoreductase (nifJ) from Klebsiella pneumoniae.